We begin with the raw amino-acid sequence, 160 residues long: MHILKKPDLSDPKMRAKLAKGMGHNYYGEPAWPNDLLYIFPVVILGTIACVVGLAVLDPAMLADKADPFATPLEILPEWYLYPVFQILRVVPNKLLGIALQTLVPLGLMLVPFIESFNKFQNPFRRPVAMTVFLFGTFTTIYLGIGAAMPIDKSLTLGLF.

The next 3 membrane-spanning stretches (helical) occupy residues 36-56, 95-115, and 128-148; these read LLYI…GLAV, LLGI…PFIE, and VAMT…IGAA.

This sequence belongs to the cytochrome b family. PetD subfamily. In terms of assembly, the 4 large subunits of the cytochrome b6-f complex are cytochrome b6, subunit IV (17 kDa polypeptide, PetD), cytochrome f and the Rieske protein, while the 4 small subunits are PetG, PetL, PetM and PetN. The complex functions as a dimer.

Its subcellular location is the cellular thylakoid membrane. Its function is as follows. Component of the cytochrome b6-f complex, which mediates electron transfer between photosystem II (PSII) and photosystem I (PSI), cyclic electron flow around PSI, and state transitions. The sequence is that of Cytochrome b6-f complex subunit 4 from Synechococcus sp. (strain CC9902).